The chain runs to 3912 residues: Ubiquitin carboxyl-terminal hydrolase puf (3912 aa).

Disordered regions lie at residues 101–172, 518–590, 660–688, 851–878, and 1491–1611; these read AQQQ…HKSH, NVTA…ISPE, DVPSSDEADGEADGDGEGELLADSDECSD, VVSGGKQHHSPKASQGSSTSGSTPVQPS, and SRRG…PALS. A compositionally biased stretch (basic and acidic residues) spans 106–133; it reads EQQRDEASAQAEAKESSAPAEEPKKEEP. Over residues 134–143 the composition is skewed to low complexity; that stretch reads SGSAGEEAQG. Over residues 150 to 164 the composition is skewed to pro residues; the sequence is KKPPVGPCTPPPPQT. The span at 522–532 shows a compositional bias: low complexity; it reads SSSDSGSIEGS. Residues 576 to 585 show a composition bias toward basic and acidic residues; sequence ICDPTTEKGK. The segment covering 660-687 has biased composition (acidic residues); sequence DVPSSDEADGEADGDGEGELLADSDECS. A compositionally biased stretch (polar residues) spans 862–876; sequence KASQGSSTSGSTPVQ. The span at 1511–1520 shows a compositional bias: basic residues; sequence VKKSSMGRRR. Over residues 1550–1567 the composition is skewed to polar residues; sequence TPSTGLQDVETEASSSSG. Basic and acidic residues predominate over residues 1583–1594; it reads KGETFEQEKERP. Residues 1600–1609 show a composition bias toward pro residues; the sequence is PPSPTPPPPA. Positions 2015–2380 constitute a USP domain; the sequence is VGLTNLGATC…SAYMLFYERR (366 aa). The Nucleophile role is filled by Cys-2024. Positions 2249–2263 are enriched in basic and acidic residues; the sequence is YKEERERRQKEKEGA. Residues 2249–2274 form a disordered region; sequence YKEERERRQKEKEGADGSGDGNDNEK. The active-site Proton acceptor is the His-2305. 4 disordered regions span residues 2391–2529, 3322–3344, 3657–3776, and 3800–3912; these read ELLV…TSKA, QQSQSQTQTPQSPQQKEKQLQQQ, SERF…EERE, and ASVP…PTQI. Composition is skewed to basic and acidic residues over residues 2402–2413 and 2433–2488; these read VEEKSEAEEPTK and EKDK…EKPT. A compositionally biased stretch (low complexity) spans 2504–2523; the sequence is NCDNHQQNNNSNSKASNDQQ. Basic and acidic residues predominate over residues 3657–3703; that stretch reads SERFRKESERDPFPNKKQKRDSQKIKEKEHPQPESEKETSTENDKPS. The span at 3706-3721 shows a compositional bias: polar residues; that stretch reads SMESSGNAEQATDSTK. The segment covering 3741–3751 has biased composition (acidic residues); the sequence is SDDETELEDEL. Positions 3766 to 3776 are enriched in basic and acidic residues; that stretch reads TAQDRVNEERE. A compositionally biased stretch (polar residues) spans 3865–3877; sequence PKTSQTNGSQQNE. Positions 3878–3912 are enriched in low complexity; it reads SPPAATSADTAPANPSPAPAAAVASTSQAASPTQI.

Belongs to the peptidase C19 family. In terms of assembly, interacts with Myc and ago.

It localises to the nucleus. The catalysed reaction is Thiol-dependent hydrolysis of ester, thioester, amide, peptide and isopeptide bonds formed by the C-terminal Gly of ubiquitin (a 76-residue protein attached to proteins as an intracellular targeting signal).. Ubiquitin hydrolase that can remove conjugated ubiquitin from target proteins and polyubiquitin chains. Essential for Myc-mediated cell growth and proliferation in developing eyes and wings. In the wing and eye, the deubiquitinating activity acts as an antagonist to the SCF E3 ubiquitin-protein ligase member archipelago (ago) to regulate Myc and CycE stability and thus control cell growth and proliferation. Also appears to regulate ago by modulating its induction by Myc. May also promote cell apoptosis in the wing imaginal disk, acting in an apoptotic pathway that appears to be largely independent of Myc. Required for preventing the activation of the immune deficiency (Imd) and Toll signaling cascades under unchallenged conditions. Also appears to be involved in modulating the differential expression of certain antimicrobial peptides (AMP) in response to infection by either Gram-positive or Gram-negative bacteria. Involved in the regulation of DNA damage repair pathways, including euchromatic site-specific double strand break (DSB) repair. The sequence is that of Ubiquitin carboxyl-terminal hydrolase puf from Drosophila melanogaster (Fruit fly).